An 85-amino-acid polypeptide reads, in one-letter code: Large ribosomal subunit protein uL29 (85 aa).

Belongs to the universal ribosomal protein uL29 family.

This is Large ribosomal subunit protein uL29 from Thermobifida fusca (strain YX).